A 313-amino-acid chain; its full sequence is Trimeric intracellular cation channel type 1B.2 (313 aa).

The Lumenal segment spans residues 1 to 28; the sequence is MGWVPDEWSIDHDTLIDAGGYVQKLKLY. A helical membrane pass occupies residues 29–48; sequence PYFDAAHYVLTCLSVRHDLG. Residues 49–57 are Cytoplasmic-facing; sequence PDAISFSRK. The chain crosses the membrane as a discontinuously helical span at residues 58–82; that stretch reads HPFSCWLSCMLMSFAGSFLSCFLLG. Residues 83–90 are Lumenal-facing; the sequence is EPIISPLK. The chain crosses the membrane as a helical span at residues 91–108; it reads QHADILLGSIVWYLVFYS. Residues 109–118 are Cytoplasmic-facing; it reads PFDVVFRLAT. The helical transmembrane segment at 119–149 threads the bilayer; the sequence is WFPVKLGLSVLKEVQRTHKIAAGVKHAVRIY. Residues lysine 130 and arginine 134 each coordinate a 1,2-diacyl-sn-glycero-3-phospho-(1D-myo-inositol-4,5-bisphosphate). The Lumenal portion of the chain corresponds to 150 to 151; it reads PE. Residues 152–178 traverse the membrane as a discontinuously helical segment; the sequence is SYLVQILVGVAKGAGSGVVKIVEQLAR. An a 1,2-diacyl-sn-glycero-3-phospho-(1D-myo-inositol-4,5-bisphosphate)-binding site is contributed by glycine 168. Residues 179 to 192 lie on the Cytoplasmic side of the membrane; the sequence is GTWHPTNHEILRPS. Residues 193–210 form a helical membrane-spanning segment; the sequence is FTTKACVIASIVFTLERH. The Lumenal segment spans residues 211 to 216; sequence SMYVTA. A helical membrane pass occupies residues 217–239; sequence PHDLVYLCVVGFFIYFKLASLCL. Residues 240 to 313 lie on the Cytoplasmic side of the membrane; that stretch reads SVHDVLMPIE…MSNGTDKKNN (74 aa).

This sequence belongs to the TMEM38 family. Homotrimer; trimerization probably requires binding to phosphatidylinositol 4,5-bisphosphate (PIP2).

The protein localises to the endoplasmic reticulum membrane. In terms of biological role, potassium channel that mediates transmembrane potassium transport. Might be required for maintenance of rapid intracellular calcium release. May act as a potassium counter-ion channel that functions in synchronization with calcium release from intracellular stores. Binds phosphatidylinositol 4,5-bisphosphate (PIP2). The chain is Trimeric intracellular cation channel type 1B.2 from Caenorhabditis elegans.